Reading from the N-terminus, the 364-residue chain is MALSRLMIRDFRNISVADLSLAADFNFLVGANGSGKTSVLEAIYTLGHGRAFRSLQSGRVIRHEQPEFVLHGRIEAGNVDARATSVGLSRNRLGDSTVRIDGSDGHKVAELAQLLPMQLITPEGFTLLNGGPKYRRAFMDWGCFHNEPGFFTAWSNLRRLLKQRNAALRQVSRYQQLRVWDQELIPLANRISEWRADYSAAIAADITATCAQFLPEFRLDFSFQRGWDKESDFGELLERQFERDRALTYTASGPHKADFRIRAEGVPVEDILSRGQLKLLMCALRLAQGEFLTHRNGRRCLYLIDDFASELDTGRRRLLAERLKATHAQVFVSAVSADQIRDIPDEKGKMFKVEQGKISLQSEV.

30 to 37 serves as a coordination point for ATP; sequence GANGSGKT.

The protein belongs to the RecF family.

It is found in the cytoplasm. In terms of biological role, the RecF protein is involved in DNA metabolism; it is required for DNA replication and normal SOS inducibility. RecF binds preferentially to single-stranded, linear DNA. It also seems to bind ATP. This is DNA replication and repair protein RecF from Sodalis glossinidius.